A 103-amino-acid chain; its full sequence is Large ribosomal subunit protein bL21 (103 aa).

Belongs to the bacterial ribosomal protein bL21 family. In terms of assembly, part of the 50S ribosomal subunit. Contacts protein L20.

In terms of biological role, this protein binds to 23S rRNA in the presence of protein L20. In Lactobacillus acidophilus (strain ATCC 700396 / NCK56 / N2 / NCFM), this protein is Large ribosomal subunit protein bL21.